A 320-amino-acid chain; its full sequence is Histidine decarboxylase proenzyme (320 aa).

Positions 2 to 11 are excised as a propeptide; that stretch reads NKNLEANRNR. The residue at position 98 (Ser98) is a Pyruvic acid (Ser). Glu215 (proton donor) is an active-site residue.

As to quaternary structure, the proenzyme is a hexamer of identical pi chains; each pi chain monomer is cleaved to form a small (or beta) chain and a large (or alpha) chain by non-hydrolytic self-catalysis. The cofactor is pyruvate.

It carries out the reaction L-histidine + H(+) = histamine + CO2. The chain is Histidine decarboxylase proenzyme (hdc) from Clostridium perfringens (strain 13 / Type A).